Here is a 122-residue protein sequence, read N- to C-terminus: Large ribosomal subunit protein uL14c (122 aa).

It belongs to the universal ribosomal protein uL14 family. Part of the 50S ribosomal subunit.

The protein resides in the plastid. The protein localises to the chloroplast. Its function is as follows. Binds to 23S rRNA. The sequence is that of Large ribosomal subunit protein uL14c from Nandina domestica (Heavenly bamboo).